A 745-amino-acid chain; its full sequence is Copper-exporting P-type ATPase B (745 aa).

Residues 1–76 (MNNGIDPENE…GMDHSHMDHE (76 aa)) form a disordered region. The Cytoplasmic segment spans residues 1–108 (MNNGIDPENE…HMGNFKQKFW (108 aa)). A compositionally biased stretch (basic and acidic residues) spans 36-76 (LQEHGKMENMDQHHTHGHMERHQQMDHGHMSGMDHSHMDHE). A run of 3 repeats spans residues 60–71 (MDHGHMSGMDHS), 73–84 (MDHEDMSGMNHS), and 86–97 (MGHENMSGMDHS). The 3 X 12 AA approximate repeats stretch occupies residues 60 to 97 (MDHGHMSGMDHSHMDHEDMSGMNHSHMGHENMSGMDHS). Residues 109-128 (LSLILAIPIILFSPMMGMSF) traverse the membrane as a helical segment. At 129–139 (PFQVTFPGSNW) the chain is on the extracellular side. Residues 140 to 160 (VVLVLATILFIYGGQPFLSGA) form a helical membrane-spanning segment. Topologically, residues 161-170 (KMELKQKSPA) are cytoplasmic. The chain crosses the membrane as a helical span at residues 171-191 (MMTLIAMGITVAYVYSVYSFI). Residues 192 to 200 (ANLINPHTH) lie on the Extracellular side of the membrane. The chain crosses the membrane as a helical span at residues 201–217 (VMDFFWELATLIVIMLL). At 218–359 (GHWIEMNAVS…EFLSDKVAKW (142 aa)) the chain is on the cytoplasmic side. A helical membrane pass occupies residues 360–379 (LFYVALVVGIIAFIAWLFLA). Residues 380 to 388 (NLPDALERM) are Extracellular-facing. A helical transmembrane segment spans residues 389-409 (VTVFIIACPHALGLAIPLVVA). The Cytoplasmic segment spans residues 410–703 (RSTSIAAKNG…QNLWWGAGYN (294 aa)). The 4-aspartylphosphate intermediate role is filled by D440. D638 and D642 together coordinate Mg(2+). A helical transmembrane segment spans residues 704 to 721 (IIAIPLAAGILAPIGLIL). At 722-723 (SP) the chain is on the extracellular side. Residues 724 to 744 (AVGAVLMSLSTVVVALNALTL) form a helical membrane-spanning segment. K745 is a topological domain (cytoplasmic).

The protein belongs to the cation transport ATPase (P-type) (TC 3.A.3) family. Type IB subfamily. As to quaternary structure, monomer.

Its subcellular location is the cell membrane. It catalyses the reaction Cu(+)(in) + ATP + H2O = Cu(+)(out) + ADP + phosphate + H(+). Inhibited by vanadate. Involved in copper export. Can also export silver. The sequence is that of Copper-exporting P-type ATPase B (copB) from Enterococcus hirae (strain ATCC 9790 / DSM 20160 / JCM 8729 / LMG 6399 / NBRC 3181 / NCIMB 6459 / NCDO 1258 / NCTC 12367 / WDCM 00089 / R).